Here is a 392-residue protein sequence, read N- to C-terminus: Putative nickel insertion protein (392 aa).

It belongs to the LarC family.

This chain is Putative nickel insertion protein, found in Pelobacter propionicus (strain DSM 2379 / NBRC 103807 / OttBd1).